The primary structure comprises 128 residues: MAGRATIPARNSALIAMIADEDTVVGFLMAGVGNVDIRRKTNYLIVDSKTTVRQIEDAFKEFSARDDIAIILLSQYIANMIRFLVDSYNKPVPAILEIPSKDHPYDPAHDSVLSRVKYLFSAESVSQR.

It belongs to the V-ATPase F subunit family. In terms of assembly, V-ATPase is a heteromultimeric enzyme composed of a peripheral catalytic V1 complex (components A to H) attached to an integral membrane V0 proton pore complex (components: a, c, c'', d and e).

It localises to the vacuole membrane. Functionally, subunit of the peripheral V1 complex of vacuolar ATPase essential for assembly or catalytic function. V-ATPase is responsible for acidifying a variety of intracellular compartments in eukaryotic cells. The polypeptide is V-type proton ATPase subunit F (VHA-F) (Arabidopsis thaliana (Mouse-ear cress)).